Here is a 159-residue protein sequence, read N- to C-terminus: NADH-quinone oxidoreductase subunit B (159 aa).

Residues Cys-36, Cys-37, Cys-102, and Cys-132 each contribute to the [4Fe-4S] cluster site.

The protein belongs to the complex I 20 kDa subunit family. NDH-1 is composed of 14 different subunits. Subunits NuoB, C, D, E, F, and G constitute the peripheral sector of the complex. [4Fe-4S] cluster is required as a cofactor.

The protein resides in the cell inner membrane. The catalysed reaction is a quinone + NADH + 5 H(+)(in) = a quinol + NAD(+) + 4 H(+)(out). NDH-1 shuttles electrons from NADH, via FMN and iron-sulfur (Fe-S) centers, to quinones in the respiratory chain. Couples the redox reaction to proton translocation (for every two electrons transferred, four hydrogen ions are translocated across the cytoplasmic membrane), and thus conserves the redox energy in a proton gradient. This Verminephrobacter eiseniae (strain EF01-2) protein is NADH-quinone oxidoreductase subunit B.